The sequence spans 350 residues: Biotin synthase (350 aa).

The Radical SAM core domain maps to 54–278 (REIQLSTLLS…TMPQSYVRLS (225 aa)). [4Fe-4S] cluster-binding residues include C69, C73, and C76. Residues C113, C144, C204, and R276 each coordinate [2Fe-2S] cluster.

The protein belongs to the radical SAM superfamily. Biotin synthase family. As to quaternary structure, homodimer. Requires [4Fe-4S] cluster as cofactor. It depends on [2Fe-2S] cluster as a cofactor.

It catalyses the reaction (4R,5S)-dethiobiotin + (sulfur carrier)-SH + 2 reduced [2Fe-2S]-[ferredoxin] + 2 S-adenosyl-L-methionine = (sulfur carrier)-H + biotin + 2 5'-deoxyadenosine + 2 L-methionine + 2 oxidized [2Fe-2S]-[ferredoxin]. The protein operates within cofactor biosynthesis; biotin biosynthesis; biotin from 7,8-diaminononanoate: step 2/2. Functionally, catalyzes the conversion of dethiobiotin (DTB) to biotin by the insertion of a sulfur atom into dethiobiotin via a radical-based mechanism. The protein is Biotin synthase of Neisseria meningitidis serogroup C / serotype 2a (strain ATCC 700532 / DSM 15464 / FAM18).